The sequence spans 149 residues: SsrA-binding protein (149 aa).

It belongs to the SmpB family.

It is found in the cytoplasm. In terms of biological role, required for rescue of stalled ribosomes mediated by trans-translation. Binds to transfer-messenger RNA (tmRNA), required for stable association of tmRNA with ribosomes. tmRNA and SmpB together mimic tRNA shape, replacing the anticodon stem-loop with SmpB. tmRNA is encoded by the ssrA gene; the 2 termini fold to resemble tRNA(Ala) and it encodes a 'tag peptide', a short internal open reading frame. During trans-translation Ala-aminoacylated tmRNA acts like a tRNA, entering the A-site of stalled ribosomes, displacing the stalled mRNA. The ribosome then switches to translate the ORF on the tmRNA; the nascent peptide is terminated with the 'tag peptide' encoded by the tmRNA and targeted for degradation. The ribosome is freed to recommence translation, which seems to be the essential function of trans-translation. In Thermosipho africanus (strain TCF52B), this protein is SsrA-binding protein.